Consider the following 621-residue polypeptide: Bifunctional protein GlmU (621 aa).

A pyrophosphorylase region spans residues 1–229; that stretch reads MAERDLAVAI…AREIVGINDR (229 aa). Residues 11–14, Lys25, Gln76, and 81–82 each bind UDP-N-acetyl-alpha-D-glucosamine; these read LAAG and GT. Asp106 contacts Mg(2+). 4 residues coordinate UDP-N-acetyl-alpha-D-glucosamine: Gly143, Glu158, Asn173, and Asn227. Asn227 provides a ligand contact to Mg(2+). Positions 230 to 250 are linker; the sequence is RQLAQAYQILQDRLKEAWMEA. Residues 251–621 form an N-acetyltransferase region; the sequence is GVTFVDPDSV…TGVGIPSCPP (371 aa). Positions 332 and 350 each coordinate UDP-N-acetyl-alpha-D-glucosamine. The active-site Proton acceptor is His362. The UDP-N-acetyl-alpha-D-glucosamine site is built by Tyr365 and Asn376. Acetyl-CoA contacts are provided by residues Ala379, 385-386, Ala422, and Arg441; that span reads NY. The interval 601 to 621 is disordered; the sequence is ATPPSPQRADGTGVGIPSCPP.

It in the N-terminal section; belongs to the N-acetylglucosamine-1-phosphate uridyltransferase family. This sequence in the C-terminal section; belongs to the transferase hexapeptide repeat family. In terms of assembly, homotrimer. The cofactor is Mg(2+).

The protein localises to the cytoplasm. It carries out the reaction alpha-D-glucosamine 1-phosphate + acetyl-CoA = N-acetyl-alpha-D-glucosamine 1-phosphate + CoA + H(+). It catalyses the reaction N-acetyl-alpha-D-glucosamine 1-phosphate + UTP + H(+) = UDP-N-acetyl-alpha-D-glucosamine + diphosphate. The protein operates within nucleotide-sugar biosynthesis; UDP-N-acetyl-alpha-D-glucosamine biosynthesis; N-acetyl-alpha-D-glucosamine 1-phosphate from alpha-D-glucosamine 6-phosphate (route II): step 2/2. It functions in the pathway nucleotide-sugar biosynthesis; UDP-N-acetyl-alpha-D-glucosamine biosynthesis; UDP-N-acetyl-alpha-D-glucosamine from N-acetyl-alpha-D-glucosamine 1-phosphate: step 1/1. Its pathway is bacterial outer membrane biogenesis; LPS lipid A biosynthesis. Its function is as follows. Catalyzes the last two sequential reactions in the de novo biosynthetic pathway for UDP-N-acetylglucosamine (UDP-GlcNAc). The C-terminal domain catalyzes the transfer of acetyl group from acetyl coenzyme A to glucosamine-1-phosphate (GlcN-1-P) to produce N-acetylglucosamine-1-phosphate (GlcNAc-1-P), which is converted into UDP-GlcNAc by the transfer of uridine 5-monophosphate (from uridine 5-triphosphate), a reaction catalyzed by the N-terminal domain. The chain is Bifunctional protein GlmU from Synechococcus sp. (strain JA-3-3Ab) (Cyanobacteria bacterium Yellowstone A-Prime).